The chain runs to 729 residues: Phenylalanine ammonia-lyase (729 aa).

Catalysis depends on Tyr-77, which acts as the Proton donor/acceptor. A cross-link (5-imidazolinone (Ala-Gly)) is located at residues 182–184; it reads ASG. The residue at position 183 (Ser-183) is a 2,3-didehydroalanine (Ser). Positions 241, 336, 342, 372, 443, 471, and 474 each coordinate (E)-cinnamate.

It belongs to the PAL/histidase family. Contains an active site 4-methylidene-imidazol-5-one (MIO), which is formed autocatalytically by cyclization and dehydration of residues Ala-Ser-Gly.

Its subcellular location is the cytoplasm. It carries out the reaction L-phenylalanine = (E)-cinnamate + NH4(+). It functions in the pathway secondary metabolite biosynthesis. Its pathway is phenylpropanoid metabolism; trans-cinnamate biosynthesis; trans-cinnamate from L-phenylalanine: step 1/1. Its function is as follows. Phenylalanine ammonia-lyase; part of the gene cluster that mediates the biosynthesis of squalestatin S1 (SQS1, also known as zaragozic acid A), a heavily oxidized fungal polyketide that offers potent cholesterol lowering activity by targeting squalene synthase (SS). SQS1 is composed of a 2,8-dioxobicyclic[3.2.1]octane-3,4,5-tricarboxyclic acid core that is connected to two lipophilic polyketide arms. These initial steps feature the priming of an unusual benzoic acid starter unit onto the highly reducing polyketide synthase pks2, followed by oxaloacetate extension and product release to generate a tricarboxylic acid containing product. The phenylalanine ammonia lyase (PAL) M7 and the acyl-CoA ligase M9 are involved in transforming phenylalanine into benzoyl-CoA. The citrate synthase-like protein R3 is involved in connecting the C-alpha-carbons of the hexaketide chain and oxaloacetate to afford the tricarboxylic acid unit. The potential hydrolytic enzymes, M8 and M10, are in close proximity to pks2 and may participate in product release. On the other side, the tetraketide arm is synthesized by a the squalestatin tetraketide synthase pks1 and enzymatically esterified to the core in the last biosynthetic step, by the acetyltransferase M4. The biosynthesis of the tetraketide must involve 3 rounds of chain extension. After the first and second rounds methyl-transfer occurs, and in all rounds of extension the ketoreductase and dehydratase are active. The enoyl reductase and C-MeT of pks1 are not active in the final round of extension. The acetyltransferase M4 appears to have a broad substrate selectivity for its acyl CoA substrate, allowing the in vitro synthesis of novel squalestatins. The biosynthesis of SQS1 requires several oxidative steps likely performed by oxidoreductases M1, R1 and R2. Finally, in support of the identification of the cluster as being responsible for SQS1 production, the cluster contains a gene encoding a putative squalene synthase (SS) R6, suggesting a likely mechanism for self-resistance. This chain is Phenylalanine ammonia-lyase, found in Phoma sp. (strain ATCC 20986 / MF5453).